The chain runs to 314 residues: DNA-directed RNA polymerase subunit alpha (314 aa).

Positions 1 to 228 are alpha N-terminal domain (alpha-NTD); sequence MIEIEKPKIE…EHLSIFVNLT (228 aa). The interval 245 to 314 is alpha C-terminal domain (alpha-CTD); it reads KEKVLEMTIE…DLGLSLRNEN (70 aa).

The protein belongs to the RNA polymerase alpha chain family. Homodimer. The RNAP catalytic core consists of 2 alpha, 1 beta, 1 beta' and 1 omega subunit. When a sigma factor is associated with the core the holoenzyme is formed, which can initiate transcription.

It carries out the reaction RNA(n) + a ribonucleoside 5'-triphosphate = RNA(n+1) + diphosphate. DNA-dependent RNA polymerase catalyzes the transcription of DNA into RNA using the four ribonucleoside triphosphates as substrates. The sequence is that of DNA-directed RNA polymerase subunit alpha from Listeria innocua serovar 6a (strain ATCC BAA-680 / CLIP 11262).